Here is a 1036-residue protein sequence, read N- to C-terminus: Lethal(2) giant larvae protein homolog 1 (1036 aa).

WD repeat units lie at residues 38 to 71, 78 to 119, 139 to 175, 199 to 233, 239 to 271, 289 to 331, 339 to 373, 395 to 473, 517 to 592, and 601 to 662; these read SALA…FTGL, VTQM…GLSF, VTVV…GQTL, SLQG…EHVF, LESL…GSPP, AINK…ETLV, VIDF…VLDL, TCSA…YKLS, QKVA…RMLI, and TAVT…LRQS. Position 662 is a phosphoserine (Ser-662). Residues 667 to 677 are compositionally biased toward basic residues; that stretch reads RKSRVSGKKRT. A disordered region spans residues 667–688; that stretch reads RKSRVSGKKRTPAASSKLQEAN. The span at 679–688 shows a compositional bias: polar residues; it reads AASSKLQEAN. WD repeat units follow at residues 722 to 782, 791 to 843, 848 to 901, and 915 to 938; these read VRCL…KEVQ, AIAV…VSAK, LTAH…VHYS, and VFTR…SLSA. Thr-957 is modified (phosphothreonine). Phosphoserine occurs at positions 964, 982, and 989. The segment at 980–1002 is disordered; sequence PESCEGSPSSAHSKRADTMEPPE.

It belongs to the WD repeat L(2)GL family. Associated with nonmuscle myosin II heavy chain. Interacts with PRKCI/aPKC, PARD6B/Par-6 and PARD6A. Interacts with STX4A. Interacts with RAB10 (GDP-bound form); the interaction is direct and promotes RAB10 association with membranes and activation through competition with the Rab inhibitor GDI1. Interacts with DCAF1. Post-translationally, phosphorylated by PRKCI. In terms of tissue distribution, widely expressed. Expressed in brain, ovary, testis, with moderate expression in lever, uterus, lung and kidney.

It localises to the early endosome membrane. Its subcellular location is the golgi apparatus. It is found in the trans-Golgi network membrane. The protein localises to the cell projection. The protein resides in the axon. It localises to the golgi apparatus membrane. Its subcellular location is the cytoplasm. It is found in the cytoskeleton. In terms of biological role, cortical cytoskeleton protein found in a complex involved in maintaining cell polarity and epithelial integrity. Involved in the regulation of mitotic spindle orientation, proliferation, differentiation and tissue organization of neuroepithelial cells. Involved in axonogenesis through RAB10 activation thereby regulating vesicular membrane trafficking toward the axonal plasma membrane. This is Lethal(2) giant larvae protein homolog 1 (LLGL1) from Bos taurus (Bovine).